The chain runs to 194 residues: Phosphoheptose isomerase (194 aa).

Residues 37–194 (IANSFKQGGK…LIEFEMAKTA (158 aa)) enclose the SIS domain. 52–54 (NGG) is a substrate binding site. Zn(2+)-binding residues include H61 and E65. Substrate contacts are provided by residues E65, 93–94 (ND), 119–121 (STS), S124, and Q172. Positions 172 and 180 each coordinate Zn(2+).

This sequence belongs to the SIS family. GmhA subfamily. In terms of assembly, homotetramer. The cofactor is Zn(2+).

It localises to the cytoplasm. The enzyme catalyses 2 D-sedoheptulose 7-phosphate = D-glycero-alpha-D-manno-heptose 7-phosphate + D-glycero-beta-D-manno-heptose 7-phosphate. It functions in the pathway carbohydrate biosynthesis; D-glycero-D-manno-heptose 7-phosphate biosynthesis; D-glycero-alpha-D-manno-heptose 7-phosphate and D-glycero-beta-D-manno-heptose 7-phosphate from sedoheptulose 7-phosphate: step 1/1. It participates in bacterial outer membrane biogenesis; LOS core biosynthesis. Its function is as follows. Catalyzes the isomerization of sedoheptulose 7-phosphate in D-glycero-D-manno-heptose 7-phosphate. In Haemophilus ducreyi (strain 35000HP / ATCC 700724), this protein is Phosphoheptose isomerase.